Here is a 108-residue protein sequence, read N- to C-terminus: Thiosulfate sulfurtransferase GlpE (108 aa).

The Rhodanese domain occupies 18–106 (ENEGATLADI…WERSGLPIET (89 aa)). Cysteine 66 functions as the Cysteine persulfide intermediate in the catalytic mechanism.

This sequence belongs to the GlpE family.

It is found in the cytoplasm. It carries out the reaction thiosulfate + hydrogen cyanide = thiocyanate + sulfite + 2 H(+). It catalyses the reaction thiosulfate + [thioredoxin]-dithiol = [thioredoxin]-disulfide + hydrogen sulfide + sulfite + 2 H(+). In terms of biological role, transferase that catalyzes the transfer of sulfur from thiosulfate to thiophilic acceptors such as cyanide or dithiols. May function in a CysM-independent thiosulfate assimilation pathway by catalyzing the conversion of thiosulfate to sulfite, which can then be used for L-cysteine biosynthesis. The protein is Thiosulfate sulfurtransferase GlpE of Actinobacillus pleuropneumoniae serotype 5b (strain L20).